The chain runs to 196 residues: MCTARTAEEIFVETIAVKTRILNDRVLLEAARAIGDRLIAGYRAGARVFMCGNGGSAADAQHFAAELTGHLIFDRPPLGAEALHANSSHLTAVANDYDYDTVFARALEGSARPGDTLFAISTSGNSMSVLRAAKTARELGVTVVAMTGESGGQLAEFADFLINVPSRDTGRIQESHIVFIHAISEHVEHALFAPRQ.

The region spanning 38–196 (LIAGYRAGAR…VEHALFAPRQ (159 aa)) is the SIS domain. Residue 53 to 55 (NGG) participates in substrate binding. 2 residues coordinate Zn(2+): histidine 62 and glutamate 66. Residues glutamate 66, 95–96 (ND), 121–123 (STS), serine 126, and glutamine 173 contribute to the substrate site. Zn(2+) is bound by residues glutamine 173 and histidine 181.

The protein belongs to the SIS family. GmhA subfamily. Requires Zn(2+) as cofactor.

The protein localises to the cytoplasm. The catalysed reaction is 2 D-sedoheptulose 7-phosphate = D-glycero-alpha-D-manno-heptose 7-phosphate + D-glycero-beta-D-manno-heptose 7-phosphate. It functions in the pathway carbohydrate biosynthesis; D-glycero-D-manno-heptose 7-phosphate biosynthesis; D-glycero-alpha-D-manno-heptose 7-phosphate and D-glycero-beta-D-manno-heptose 7-phosphate from sedoheptulose 7-phosphate: step 1/1. Its function is as follows. Catalyzes the isomerization of sedoheptulose 7-phosphate in D-glycero-D-manno-heptose 7-phosphate. This Mycobacterium bovis (strain ATCC BAA-935 / AF2122/97) protein is Phosphoheptose isomerase.